Here is a 581-residue protein sequence, read N- to C-terminus: Arginine--tRNA ligase (581 aa).

The 'HIGH' region signature appears at 126 to 136 (PNLAKEMHVGH).

Belongs to the class-I aminoacyl-tRNA synthetase family. In terms of assembly, monomer.

Its subcellular location is the cytoplasm. It carries out the reaction tRNA(Arg) + L-arginine + ATP = L-arginyl-tRNA(Arg) + AMP + diphosphate. The protein is Arginine--tRNA ligase of Shewanella woodyi (strain ATCC 51908 / MS32).